The primary structure comprises 124 residues: Small ribosomal subunit protein uS12 (124 aa).

Aspartate 89 carries the post-translational modification 3-methylthioaspartic acid.

Belongs to the universal ribosomal protein uS12 family. Part of the 30S ribosomal subunit. Contacts proteins S8 and S17. May interact with IF1 in the 30S initiation complex.

In terms of biological role, with S4 and S5 plays an important role in translational accuracy. Its function is as follows. Interacts with and stabilizes bases of the 16S rRNA that are involved in tRNA selection in the A site and with the mRNA backbone. Located at the interface of the 30S and 50S subunits, it traverses the body of the 30S subunit contacting proteins on the other side and probably holding the rRNA structure together. The combined cluster of proteins S8, S12 and S17 appears to hold together the shoulder and platform of the 30S subunit. This chain is Small ribosomal subunit protein uS12, found in Klebsiella pneumoniae (strain 342).